A 718-amino-acid polypeptide reads, in one-letter code: Origin of replication complex subunit 3 (718 aa).

The span at 26-43 (GAAASSSSSSAPSLPSSG) shows a compositional bias: low complexity. The interval 26–75 (GAAASSSSSSAPSLPSSGRARRRIDVSGLASPNPKPGKRSRDDDAAEDDD) is disordered. The short motif at 659–666 (IKRKPHTS) is the Nuclear localization signal element.

The protein belongs to the ORC3 family. Component of the origin recognition complex (ORC) composed of at least ORC1, ORC2, ORC3, ORC4, ORC5 and ORC6. ORC is regulated in a cell-cycle and development dependent manner. It is sequentially assembled at the exit from anaphase of mitosis and disassembled as cells enter S phase. In terms of tissue distribution, expressed at low levels in the shoot apical meristem (SAM), leaves, ears and roots (including root tips).

The protein localises to the nucleus. In terms of biological role, component of the origin recognition complex (ORC) that binds origins of replication. DNA-binding is ATP-dependent. The specific DNA sequences that define origins of replication have not been identified yet. The chain is Origin of replication complex subunit 3 from Oryza sativa subsp. japonica (Rice).